A 232-amino-acid chain; its full sequence is MAKIAKRVQKSREGVDPAKLYGLTEAVTMIKERATAKFDETIEVAMNLGVDPRHADQMVRGVVNLPNGTGRSVRVAVFARGAKADEAKAAGADVVGAEELVEIVQGGKIDFDRCIATPDMMPLVGRLGKVLGPRGMMPNPKVGTVTMDVAGAVKASKGGAVEFRVEKAGIVHAGIGKASFDAKALEENIRAFADAVIKAKPTGAKGNYVKRVAVSSTMGPGLKIDPATISAA.

This sequence belongs to the universal ribosomal protein uL1 family. As to quaternary structure, part of the 50S ribosomal subunit.

Binds directly to 23S rRNA. The L1 stalk is quite mobile in the ribosome, and is involved in E site tRNA release. Its function is as follows. Protein L1 is also a translational repressor protein, it controls the translation of the L11 operon by binding to its mRNA. The chain is Large ribosomal subunit protein uL1 from Sinorhizobium medicae (strain WSM419) (Ensifer medicae).